We begin with the raw amino-acid sequence, 230 residues long: Cytochrome b6-f complex iron-sulfur subunit, chloroplastic (230 aa).

Over residues 1-16 (MASTTLSATPTPSQLS) the composition is skewed to low complexity. Positions 1-20 (MASTTLSATPTPSQLSAAKN) are disordered. Residues 1 to 56 (MASTTLSATPTPSQLSAAKNGAYSPSRALLGKTARGLYPEKEMVSRKVTCQATSIP) constitute a chloroplast transit peptide. The chain crosses the membrane as a helical span at residues 73-93 (LLGALSLPTAGMLIPYGAFFV). Residues 116-212 (AAAWLKTHGP…CDISEEGKVV (97 aa)) enclose the Rieske domain. Residues Cys158, His160, Cys176, and His179 each contribute to the [2Fe-2S] cluster site. Residues Cys163 and Cys178 are joined by a disulfide bond.

Belongs to the Rieske iron-sulfur protein family. In terms of assembly, the 4 large subunits of the cytochrome b6-f complex are cytochrome b6, subunit IV (17 kDa polypeptide, petD), cytochrome f and the Rieske protein, while the 4 small subunits are petG, petL, petM and petN. The complex functions as a dimer. [2Fe-2S] cluster is required as a cofactor.

It is found in the plastid. The protein resides in the chloroplast thylakoid membrane. It catalyses the reaction 2 oxidized [plastocyanin] + a plastoquinol + 2 H(+)(in) = 2 reduced [plastocyanin] + a plastoquinone + 4 H(+)(out). In terms of biological role, component of the cytochrome b6-f complex, which mediates electron transfer between photosystem II (PSII) and photosystem I (PSI), cyclic electron flow around PSI, and state transitions. The polypeptide is Cytochrome b6-f complex iron-sulfur subunit, chloroplastic (petC) (Fritillaria agrestis (Stinkbells)).